Consider the following 368-residue polypeptide: Xaa-Pro dipeptidase (368 aa).

The Mn(2+) site is built by Asp-223, Asp-234, His-298, Glu-327, and Glu-341.

This sequence belongs to the peptidase M24B family. The cofactor is Mn(2+).

Its subcellular location is the cytoplasm. It catalyses the reaction Xaa-L-Pro dipeptide + H2O = an L-alpha-amino acid + L-proline. This chain is Xaa-Pro dipeptidase (pepQ), found in Lactobacillus helveticus (Lactobacillus suntoryeus).